The chain runs to 377 residues: MSDTLDLAVELIRRESVTPEDAGCMDLVIERLAPHGFQAEWLNFGDTKNLWLRRGEAAPLFVFLGHTDVVPPGPLEDWSSPPFAPEIREGRLYGRGAADMKGSIAAMTTALQRFVVHHPGHPGSLAVLLTSDEEGSAYDGVVKVVDVLKSRDTVIDWCLVGEPSSFARLGDVIRVGRRGSLGGVLRILGVQGHVAYPDKADNPIHRFAPALHELTTEIWDGGNEFFPPTSFQVSNIRAGTGADNVIPGKLEVLFNFRFSTELTVEAIQRRVETILDRHGLHYELSWRLSGLPFLTRETELVSATRAAIAAVTGLQPRADTGGGTSDGRFIAPTGAQVVELGPLNGSIHKIDEHVAVEDLEALSAIYERILGNLLAVL.

Residue H66 coordinates Zn(2+). D68 is a catalytic residue. D99 is a binding site for Zn(2+). Residue E133 is the Proton acceptor of the active site. 3 residues coordinate Zn(2+): E134, E162, and H348.

This sequence belongs to the peptidase M20A family. DapE subfamily. Homodimer. Zn(2+) serves as cofactor. It depends on Co(2+) as a cofactor.

It carries out the reaction N-succinyl-(2S,6S)-2,6-diaminopimelate + H2O = (2S,6S)-2,6-diaminopimelate + succinate. The protein operates within amino-acid biosynthesis; L-lysine biosynthesis via DAP pathway; LL-2,6-diaminopimelate from (S)-tetrahydrodipicolinate (succinylase route): step 3/3. Catalyzes the hydrolysis of N-succinyl-L,L-diaminopimelic acid (SDAP), forming succinate and LL-2,6-diaminopimelate (DAP), an intermediate involved in the bacterial biosynthesis of lysine and meso-diaminopimelic acid, an essential component of bacterial cell walls. In Methylococcus capsulatus (strain ATCC 33009 / NCIMB 11132 / Bath), this protein is Succinyl-diaminopimelate desuccinylase.